Consider the following 652-residue polypeptide: ATP-dependent zinc metalloprotease FtsH (652 aa).

The Cytoplasmic portion of the chain corresponds to 1 to 11 (MKKQNNGLIKN). A helical transmembrane segment spans residues 12–32 (PFLWLLFIFFLVTGFQYFYSG). The Extracellular segment spans residues 33 to 131 (NNSGGSQQIN…EVTVKHESSS (99 aa)). A helical transmembrane segment spans residues 132-152 (GIWINLLVSIVPFGILFFFLF). At 153-652 (SMMGNMGGGN…EVKSKMNDEK (500 aa)) the chain is on the cytoplasmic side. 227 to 234 (GPPGTGKT) serves as a coordination point for ATP. Zn(2+) is bound at residue H449. The active site involves E450. Residues H453 and D525 each contribute to the Zn(2+) site. A disordered region spans residues 628-652 (MPEAVEEESHALSYDEVKSKMNDEK). Over residues 634-652 (EESHALSYDEVKSKMNDEK) the composition is skewed to basic and acidic residues.

This sequence in the central section; belongs to the AAA ATPase family. It in the C-terminal section; belongs to the peptidase M41 family. In terms of assembly, homohexamer. The cofactor is Zn(2+).

Its subcellular location is the cell membrane. In terms of biological role, acts as a processive, ATP-dependent zinc metallopeptidase for both cytoplasmic and membrane proteins. Plays a role in the quality control of integral membrane proteins. The sequence is that of ATP-dependent zinc metalloprotease FtsH from Streptococcus pneumoniae (strain ATCC BAA-255 / R6).